A 450-amino-acid chain; its full sequence is Glycerol dehydrogenase 1 (450 aa).

Residues Asp-99, 155–159 (GKTMD), and 177–180 (TTAS) each bind NAD(+). Position 182 (Asp-182) interacts with substrate. NAD(+) contacts are provided by Ser-186, Leu-188, and Tyr-192. Substrate contacts are provided by Asp-232, His-315, and His-333. Zn(2+)-binding residues include Asp-232, His-315, and His-333.

It belongs to the iron-containing alcohol dehydrogenase family. Zn(2+) is required as a cofactor.

The protein localises to the mitochondrion. It catalyses the reaction glycerol + NAD(+) = dihydroxyacetone + NADH + H(+). It functions in the pathway polyol metabolism; glycerol fermentation; glycerone phosphate from glycerol (oxidative route): step 1/2. Functionally, glycerol dehydrogenase involved in the assimilation of glycerol. The sequence is that of Glycerol dehydrogenase 1 (gld1) from Schizosaccharomyces pombe (strain 972 / ATCC 24843) (Fission yeast).